Consider the following 505-residue polypeptide: Probable bifunctional methylthioribulose-1-phosphate dehydratase/enolase-phosphatase E1 (505 aa).

The methylthioribulose-1-phosphate dehydratase stretch occupies residues Met-1 to Asp-237. Residue Cys-109 participates in substrate binding. His-127 and His-129 together coordinate Zn(2+). Glu-152 (proton donor/acceptor; for methylthioribulose-1-phosphate dehydratase activity) is an active-site residue. Residue His-202 participates in Zn(2+) binding. Residues Phe-266–Leu-505 are enolase-phosphatase E1. 2 residues coordinate Mg(2+): Asp-269 and Glu-271. Substrate is bound by residues Ser-404–Ser-405 and Lys-438. Asp-464 is a binding site for Mg(2+).

It in the N-terminal section; belongs to the aldolase class II family. MtnB subfamily. In the C-terminal section; belongs to the HAD-like hydrolase superfamily. MasA/MtnC family. The cofactor is Zn(2+). Mg(2+) is required as a cofactor.

The enzyme catalyses 5-(methylsulfanyl)-D-ribulose 1-phosphate = 5-methylsulfanyl-2,3-dioxopentyl phosphate + H2O. It carries out the reaction 5-methylsulfanyl-2,3-dioxopentyl phosphate + H2O = 1,2-dihydroxy-5-(methylsulfanyl)pent-1-en-3-one + phosphate. It functions in the pathway amino-acid biosynthesis; L-methionine biosynthesis via salvage pathway; L-methionine from S-methyl-5-thio-alpha-D-ribose 1-phosphate: step 2/6. The protein operates within amino-acid biosynthesis; L-methionine biosynthesis via salvage pathway; L-methionine from S-methyl-5-thio-alpha-D-ribose 1-phosphate: step 3/6. Its pathway is amino-acid biosynthesis; L-methionine biosynthesis via salvage pathway; L-methionine from S-methyl-5-thio-alpha-D-ribose 1-phosphate: step 4/6. The sequence is that of Probable bifunctional methylthioribulose-1-phosphate dehydratase/enolase-phosphatase E1 from Physcomitrium patens (Spreading-leaved earth moss).